Reading from the N-terminus, the 198-residue chain is dCTP deaminase, dUMP-forming (198 aa).

DCTP is bound by residues 115-120 (KSSIAR), D133, 141-143 (TLE), Q162, Y175, and K184. Catalysis depends on E143, which acts as the Proton donor/acceptor.

Belongs to the dCTP deaminase family. Homotrimer.

The catalysed reaction is dCTP + 2 H2O = dUMP + NH4(+) + diphosphate. Its pathway is pyrimidine metabolism; dUMP biosynthesis; dUMP from dCTP: step 1/1. Bifunctional enzyme that catalyzes both the deamination of dCTP to dUTP and the hydrolysis of dUTP to dUMP without releasing the toxic dUTP intermediate. The chain is dCTP deaminase, dUMP-forming from Nanoarchaeum equitans (strain Kin4-M).